Here is a 715-residue protein sequence, read N- to C-terminus: ATP-dependent DNA helicase Hel308 (715 aa).

The Q motif signature appears at 8–36; sequence MPIEDLKLPSNVIEIIKKRGIKKLNPPQT. Residues Gln-35 and 53–60 each bind ATP; that span reads SPTGSGKT. In terms of domain architecture, Helicase ATP-binding spans 40-203; sequence KKGLLEGNRL…WLGAEPVATN (164 aa). A DEAH box motif is present at residues 152–155; that stretch reads DELH. In terms of domain architecture, Helicase C-terminal spans 236–442; the sequence is HGDDAIIAYT…ERAFYTFLLG (207 aa).

The protein belongs to the helicase family. Hel308 subfamily. Monomer.

It carries out the reaction Couples ATP hydrolysis with the unwinding of duplex DNA by translocating in the 3'-5' direction.. The enzyme catalyses ATP + H2O = ADP + phosphate + H(+). Its function is as follows. DNA-dependent ATPase and 3'-5' DNA helicase that may be involved in repair of stalled replication forks. A low processivity 3'-5' helicase. Unwinds short dsDNA substrates with 3'-overhangs (25 bp dsDNA with 25 base overhang), less active on longer dsDNA substrates. Also unwinds the lagging strand of a stalled replication fork (but the leading strand was not tested). Binds ssDNA, but dsDNA about 35-fold less well. Able to displace streptavidin from biotinylated ssDNA, which is partially inhibited by DNA-binding proteins, suggesting it may play a role in stripping proteins from stalled replication forks. The chain is ATP-dependent DNA helicase Hel308 from Saccharolobus solfataricus (strain 98/2) (Sulfolobus solfataricus).